The sequence spans 253 residues: Sulfate transporter CysZ (253 aa).

4 helical membrane-spanning segments follow: residues 31–51 (FVILPLLVNILLMGGAFWWLF), 75–95 (LLWPLAVISVLLVFGYFFSTI), 151–171 (IVLLILYFIPGIGQTVAPVLW), and 222–242 (IPLLNLFIMPVAVCGATAMWV).

It belongs to the CysZ family.

Its subcellular location is the cell inner membrane. Functionally, high affinity, high specificity proton-dependent sulfate transporter, which mediates sulfate uptake. Provides the sulfur source for the cysteine synthesis pathway. The sequence is that of Sulfate transporter CysZ from Escherichia coli O127:H6 (strain E2348/69 / EPEC).